The primary structure comprises 704 residues: Elongation factor G (704 aa).

One can recognise a tr-type G domain in the interval 8–291; that stretch reads VRYRNIGISA…AVVEYLPSPS (284 aa). GTP is bound by residues 17–24, 88–92, and 142–145; these read AHIDAGKT, DTPGH, and NKMD.

The protein belongs to the TRAFAC class translation factor GTPase superfamily. Classic translation factor GTPase family. EF-G/EF-2 subfamily.

Its subcellular location is the cytoplasm. Catalyzes the GTP-dependent ribosomal translocation step during translation elongation. During this step, the ribosome changes from the pre-translocational (PRE) to the post-translocational (POST) state as the newly formed A-site-bound peptidyl-tRNA and P-site-bound deacylated tRNA move to the P and E sites, respectively. Catalyzes the coordinated movement of the two tRNA molecules, the mRNA and conformational changes in the ribosome. The sequence is that of Elongation factor G from Blochmanniella pennsylvanica (strain BPEN).